The following is a 354-amino-acid chain: Putative F-box/kelch-repeat protein At5g03000 (354 aa).

In terms of domain architecture, F-box spans Pro37–Ile86. 2 Kelch repeats span residues Glu143–Gly189 and Lys190–Lys236.

This is Putative F-box/kelch-repeat protein At5g03000 from Arabidopsis thaliana (Mouse-ear cress).